The sequence spans 262 residues: Indole-3-glycerol phosphate synthase (262 aa).

Belongs to the TrpC family.

The catalysed reaction is 1-(2-carboxyphenylamino)-1-deoxy-D-ribulose 5-phosphate + H(+) = (1S,2R)-1-C-(indol-3-yl)glycerol 3-phosphate + CO2 + H2O. Its pathway is amino-acid biosynthesis; L-tryptophan biosynthesis; L-tryptophan from chorismate: step 4/5. The polypeptide is Indole-3-glycerol phosphate synthase (Clostridium acetobutylicum (strain ATCC 824 / DSM 792 / JCM 1419 / IAM 19013 / LMG 5710 / NBRC 13948 / NRRL B-527 / VKM B-1787 / 2291 / W)).